Consider the following 356-residue polypeptide: Serine/threonine-protein phosphatase 4 regulatory subunit 2 (356 aa).

The span at 202-240 shows a compositional bias: acidic residues; the sequence is NEGAGDDEDDDQDYVDEDSATSEDEEEDVEEEEEEEGPE. The interval 202–335 is disordered; it reads NEGAGDDEDD…PQLTTSATNV (134 aa). Residues 326-335 show a composition bias toward polar residues; sequence PQLTTSATNV.

Belongs to the PPP4R2 family. In terms of assembly, regulatory subunit (R2) of the histone H2A phosphatase complex (HTP-C) consisting of PPH3, PSY2 and PSY4.

It is found in the nucleus. In terms of biological role, regulatory subunit of the histone H2A phosphatase complex, which dephosphorylates H2AS128ph (gamma-H2A) that has been displaced from sites of DNA lesions in the double-stranded DNA break repair process. Dephosphorylation is necessary for efficient recovery from the DNA damage checkpoint. The protein is Serine/threonine-protein phosphatase 4 regulatory subunit 2 (PSY4) of Eremothecium gossypii (strain ATCC 10895 / CBS 109.51 / FGSC 9923 / NRRL Y-1056) (Yeast).